We begin with the raw amino-acid sequence, 78 residues long: Acyl carrier protein (78 aa).

Residues 2 to 77 (SDIEARVKKI…NAIDYANTHQ (76 aa)) enclose the Carrier domain. The residue at position 37 (serine 37) is an O-(pantetheine 4'-phosphoryl)serine.

The protein belongs to the acyl carrier protein (ACP) family. 4'-phosphopantetheine is transferred from CoA to a specific serine of apo-ACP by AcpS. This modification is essential for activity because fatty acids are bound in thioester linkage to the sulfhydryl of the prosthetic group.

It localises to the cytoplasm. It participates in lipid metabolism; fatty acid biosynthesis. Functionally, carrier of the growing fatty acid chain in fatty acid biosynthesis. The protein is Acyl carrier protein of Comamonas testosteroni (Pseudomonas testosteroni).